Here is a 134-residue protein sequence, read N- to C-terminus: U-scoloptoxin(05)-Er2a (134 aa).

Residues 1 to 19 (MTFVVAAVVLLTVVPLATP) form the signal peptide.

The protein belongs to the scoloptoxin-05 family. Post-translationally, contains 5 disulfide bonds. As to expression, expressed by the venom gland.

Its subcellular location is the secreted. The protein is U-scoloptoxin(05)-Er2a of Ethmostigmus rubripes (Giant centipede).